The primary structure comprises 101 residues: Conopressin/conophysin, isoform 3 (101 aa).

Residue A1 is a signal peptide. A disulfide bridge links C2 with C7. Glycine amide is present on G10. Positions G11–G18 are excised as a propeptide. Cystine bridges form between C23/C63, C26/C37, C31/C53, C38/C43, C70/C88, C82/C100, and C89/C94.

It belongs to the vasopressin/oxytocin family. Expressed by the venom gland.

It localises to the secreted. Its function is as follows. Targets vasopressin-oxytocin related receptors. Is more active on fish receptors than on their human counterparts, supporting an evolved role of this conopressin in the envenomation process. Acts as an agonist on zebrafish vasopressin receptors V1a1R (EC(50)=10.6 nM), V1a2R (EC(50)=44.06 nM, partial agonist), V2R (EC(50)=299.2 nM) and oxytocin receptor (EC(50)=353.73 nM, partial agonist). Shows a weaker activity on human receptors AVPR1B (EC(50)=51.92 nM), AVPR1A (EC(50)=123.78 nM), AVPR2 (EC(50)=299.2 nM) and oxytocin (OXTR) receptor (EC(50)=455.66 nM, partial agonist). In vivo, exhibits grooming and scratching behavior in mice, following intracerebral injection. This Conus monile (Necklace cone) protein is Conopressin/conophysin, isoform 3.